The primary structure comprises 70 residues: Mu-conotoxin PnIVB (70 aa).

The signal sequence occupies residues 1–20 (MMSKLGVLLIICLLLCPLTA). A propeptide spanning residues 21 to 51 (VPQDGDQPADQPAERMQDDISSEHHPFFDPV) is cleaved from the precursor.

In terms of processing, contains 3 disulfide bonds. They are not added, since framework IV presents two different connectivities (I-V, II-III, IV-VI and I-III, II-V, IV-VI). In terms of tissue distribution, expressed by the venom duct.

It is found in the secreted. Mu-conotoxins block voltage-gated sodium channels (Nav). Blocks reversibly sodium channels in molluskan neurons, but has no effect on sodium currents in bovine chromaffin cells or in rat brain synaptosomes. Induces paralysis in bivalve mollusks (Mytilus). No effect are observed on fish (Gambusia) and fly larvae (Sarcophaga). Is approximately 6 times more potent than PnIVA in blockade of the sodium current in Lymnaea neurons. The sequence is that of Mu-conotoxin PnIVB from Conus pennaceus (Feathered cone).